A 567-amino-acid polypeptide reads, in one-letter code: Urease subunit alpha (567 aa).

One can recognise a Urease domain in the interval G129 to F567. 3 residues coordinate Ni(2+): H134, H136, and K217. K217 carries the N6-carboxylysine modification. H219 lines the substrate pocket. Residues H246 and H272 each coordinate Ni(2+). H320 serves as the catalytic Proton donor. Residue D360 coordinates Ni(2+).

This sequence belongs to the metallo-dependent hydrolases superfamily. Urease alpha subunit family. Heterotrimer of UreA (gamma), UreB (beta) and UreC (alpha) subunits. Three heterotrimers associate to form the active enzyme. It depends on Ni cation as a cofactor. Post-translationally, carboxylation allows a single lysine to coordinate two nickel ions.

It is found in the cytoplasm. The enzyme catalyses urea + 2 H2O + H(+) = hydrogencarbonate + 2 NH4(+). Its pathway is nitrogen metabolism; urea degradation; CO(2) and NH(3) from urea (urease route): step 1/1. The protein is Urease subunit alpha of Teredinibacter turnerae (strain ATCC 39867 / T7901).